A 260-amino-acid polypeptide reads, in one-letter code: PHD finger protein ALFIN-LIKE 5 (260 aa).

Residue M1 is modified to N-acetylmethionine. The interval 142–203 (AEKQTKEMPS…EEDEDEDEHG (62 aa)) is disordered. Over residues 148-165 (EMPSSANQNGNRSKSNSK) the composition is skewed to polar residues. Positions 167 to 181 (RGLESKSSKTIHAKD) are enriched in basic and acidic residues. The segment covering 182 to 202 (EEEGLELEEGEEEEDEDEDEH) has biased composition (acidic residues). A PHD-type zinc finger spans residues 204–256 (ETLCGACGDNYASDEFWICCDMCEKWFHGECVKITPARAEHIKHYKCPTCSNK).

Belongs to the Alfin family. As to quaternary structure, interacts with H3K4me3 and to a lesser extent with H3K4me2. Ubiquitously expressed.

The protein localises to the nucleus. Histone-binding component that specifically recognizes H3 tails trimethylated on 'Lys-4' (H3K4me3), which mark transcription start sites of virtually all active genes. The sequence is that of PHD finger protein ALFIN-LIKE 5 (AL5) from Arabidopsis thaliana (Mouse-ear cress).